The following is a 58-amino-acid chain: ATP synthase F(0) complex subunit k, mitochondrial (58 aa).

Lysine 16 and lysine 17 each carry N6-acetyllysine; partial. The helical transmembrane segment at 23–45 threads the bilayer; sequence TLTGRMNCVLATYGSIALIVLYF.

As to quaternary structure, component of the ATP synthase complex composed at least of ATP5F1A/subunit alpha, ATP5F1B/subunit beta, ATP5MC1/subunit c (homooctomer), MT-ATP6/subunit a, MT-ATP8/subunit 8, ATP5ME/subunit e, ATP5MF/subunit f, ATP5MG/subunit g, ATP5MK/subunit k, ATP5MJ/subunit j, ATP5F1C/subunit gamma, ATP5F1D/subunit delta, ATP5F1E/subunit epsilon, ATP5PF/subunit F6, ATP5PB/subunit b, ATP5PD/subunit d, ATP5PO/subunit OSCP. ATP synthase complex consists of a soluble F(1) head domain (subunits alpha(3) and beta(3)) - the catalytic core - and a membrane F(0) domain - the membrane proton channel (subunits c, a, 8, e, f, g, k and j). These two domains are linked by a central stalk (subunits gamma, delta, and epsilon) rotating inside the F1 region and a stationary peripheral stalk (subunits F6, b, d, and OSCP). The ATP synthase complex/complex V exists as a monomeric and a dimeric supercomplex that helps shape mitochondrial cristae to optimize proton flow.

Its subcellular location is the mitochondrion membrane. Subunit k, of the mitochondrial membrane ATP synthase complex (F(1)F(0) ATP synthase or Complex V) that produces ATP from ADP in the presence of a proton gradient across the membrane which is generated by electron transport complexes of the respiratory chain. ATP synthase complex consist of a soluble F(1) head domain - the catalytic core - and a membrane F(1) domain - the membrane proton channel. These two domains are linked by a central stalk rotating inside the F(1) region and a stationary peripheral stalk. During catalysis, ATP synthesis in the catalytic domain of F(1) is coupled via a rotary mechanism of the central stalk subunits to proton translocation. In vivo, can only synthesize ATP although its ATP hydrolase activity can be activated artificially in vitro. Part of the complex F(0) domain. Required for dimerization of the ATP synthase complex and as such regulates ATP synthesis in the mitochondria. The polypeptide is ATP synthase F(0) complex subunit k, mitochondrial (Bos taurus (Bovine)).